Reading from the N-terminus, the 211-residue chain is Uracil phosphoribosyltransferase (211 aa).

5-phospho-alpha-D-ribose 1-diphosphate contacts are provided by residues arginine 78, arginine 103, and 130 to 138 (DPMLATGGT). Uracil contacts are provided by residues isoleucine 195 and 200–202 (GDA). 5-phospho-alpha-D-ribose 1-diphosphate is bound at residue aspartate 201.

This sequence belongs to the UPRTase family. Mg(2+) serves as cofactor.

It catalyses the reaction UMP + diphosphate = 5-phospho-alpha-D-ribose 1-diphosphate + uracil. The protein operates within pyrimidine metabolism; UMP biosynthesis via salvage pathway; UMP from uracil: step 1/1. Its activity is regulated as follows. Allosterically activated by GTP. Catalyzes the conversion of uracil and 5-phospho-alpha-D-ribose 1-diphosphate (PRPP) to UMP and diphosphate. The sequence is that of Uracil phosphoribosyltransferase from Paenarthrobacter aurescens (strain TC1).